The following is a 945-amino-acid chain: Chaperone protein ClpD, chloroplastic (945 aa).

The N-terminal 89 residues, 1–89, are a transit peptide targeting the chloroplast; sequence MEVLSTSSPL…FERFTERAIR (89 aa). 2 repeat regions span residues 90-146 and 168-233; these read AIIF…WDEA and FSIS…LKGE. A Clp R domain is found at 90–233; it reads AIIFSQKEAK…AAALTRLKGE (144 aa). Residues 233–264 are disordered; that stretch reads EIAKDGREPSSSSKGSFESPPSGRIAGSGPGG. Positions 241-255 are enriched in low complexity; sequence PSSSSKGSFESPPSG. The interval 271-523 is i; it reads LEQFCVDLTA…RARIEAFRKK (253 aa). 316 to 323 provides a ligand contact to ATP; the sequence is GEAGVGKT. Residues 555–586 form a disordered region; it reads SRQKQDDGDAISDESGELVEESSLPPAAGDDE. Positions 562–574 are enriched in acidic residues; that stretch reads GDAISDESGELVE. The interval 590–781 is II; it reads VGPDDIAAVA…LIIMTSNVGS (192 aa). Residue 664-671 coordinates ATP; the sequence is GPTGVGKT.

The protein belongs to the ClpA/ClpB family. ClpD subfamily. Homodimer and homohexamer. Hexamerization upon addition of ATP. Interacts with CLPT1. Stably associated with the import machinery. Mg(2+) serves as cofactor. In terms of tissue distribution, expressed in stems and leaves.

The protein resides in the plastid. It localises to the chloroplast stroma. The enzyme catalyses ATP + H2O = ADP + phosphate + H(+). Its function is as follows. Molecular chaperone that interact with a ClpP-like protease involved in degradation of denatured proteins in the chloroplast. The ATPase activity of CLPD is stimulated by CLPT1. Has no ADPase activity. Interacts with transit peptides with a positional preference. Localization of the signal sequence at the N-terminal end of a protein seems mandatory for interaction to take place. The protein is Chaperone protein ClpD, chloroplastic of Arabidopsis thaliana (Mouse-ear cress).